We begin with the raw amino-acid sequence, 403 residues long: JmjC domain-containing histone demethylation protein 1 (403 aa).

The region spanning 141-328 (WSLREWCNYF…QQLKIVDVEK (188 aa)) is the JmjC domain. Threonine 221 lines the substrate pocket. Histidine 224 and aspartate 226 together coordinate Fe cation. A substrate-binding site is contributed by lysine 241. A Fe cation-binding site is contributed by histidine 296.

It belongs to the JHDM1 histone demethylase family. Requires Fe(2+) as cofactor.

It localises to the nucleus. The catalysed reaction is N(6),N(6)-dimethyl-L-lysyl(36)-[histone H3] + 2 2-oxoglutarate + 2 O2 = L-lysyl(36)-[histone H3] + 2 formaldehyde + 2 succinate + 2 CO2. Its function is as follows. Histone demethylase that specifically demethylates 'Lys-36' of histone H3, thereby playing a central role in histone code. The protein is JmjC domain-containing histone demethylation protein 1 (JHD1) of Candida glabrata (strain ATCC 2001 / BCRC 20586 / JCM 3761 / NBRC 0622 / NRRL Y-65 / CBS 138) (Yeast).